A 413-amino-acid polypeptide reads, in one-letter code: Ureide permease 5 (413 aa).

The Extracellular segment spans residues 1–18; it reads MMIAQELGIYVVESKGGA. The helical transmembrane segment at 19-39 threads the bilayer; that stretch reads ILCLLLSLLCLGTWPALMALL. Topologically, residues 40-50 are cytoplasmic; the sequence is ERRGRLPQHTY. The chain crosses the membrane as a helical span at residues 51-71; sequence LDYSITNFLAAIFIAFVFGGI. The Extracellular segment spans residues 72-91; the sequence is GESTHEAPSFITQLTQIQDN. The helical transmembrane segment at 92–112 threads the bilayer; that stretch reads WPSVLFAMAGGVGLSIGNLAT. At 113-115 the chain is on the cytoplasmic side; it reads QYS. The helical transmembrane segment at 116–136 threads the bilayer; it reads LAFVGLSVTEVTAASITVVVG. Topologically, residues 137–149 are extracellular; that stretch reads TTVNYFLDNGLNR. The helical transmembrane segment at 150–170 threads the bilayer; that stretch reads ADILFSGVGCFMVAVCLGSAV. Topologically, residues 171-240 are cytoplasmic; that stretch reads HSSNSADIKA…RAIKVLGKSM (70 aa). 232–239 contributes to the ATP binding site; sequence AIKVLGKS. The helical transmembrane segment at 241 to 261 threads the bilayer; it reads VVGLGITFFAGLSFSLFSPLF. Residues 262 to 278 are Extracellular-facing; sequence NLATNDQWHTLKQGVPK. The helical transmembrane segment at 279–299 threads the bilayer; sequence LIVYTAFFYFSLSCFVIAVAL. Over 300-326 the chain is Cytoplasmic; sequence NISFLYKPVLDSPRSSFREYLSDWNGR. Residues 327-347 form a helical membrane-spanning segment; the sequence is GWALAAGLLCGFGNGLQFMGG. Topologically, residues 348–352 are extracellular; it reads QAAGY. The chain crosses the membrane as a helical span at residues 353–373; sequence AASDAVQALPLVSTFWGIYLF. Residues 374–384 are Cytoplasmic-facing; that stretch reads GEYRRSSTRTY. A helical transmembrane segment spans residues 385–405; the sequence is ALLVGMLVMFTVAVGLLMASA. Residues 406-413 lie on the Extracellular side of the membrane; sequence GERETRFT.

The protein belongs to the plant ureide permease (TC 2.A.7.19) family. As to expression, expressed in lateral roots, rosette leaves, stems, stipules, flower stigma, pedicels and the connective tissue between pollen sacks.

Its subcellular location is the membrane. In terms of biological role, proton-coupled transporter that transports a wide spectrum of oxo derivatives of heterocyclic nitrogen compounds, including allantoin, uric acid and xanthine, but not adenine. Mediates transport of uracil and 5-fluorouracil (a toxic uracil analog). Its function is as follows. Proton-coupled transporter that transports a wide spectrum of oxo derivatives of heterocyclic nitrogen compounds, including allantoin, xanthine and uracil. The polypeptide is Ureide permease 5 (Arabidopsis thaliana (Mouse-ear cress)).